We begin with the raw amino-acid sequence, 723 residues long: Catalase-peroxidase (723 aa).

The segment at residues W98–Y226 is a cross-link (tryptophyl-tyrosyl-methioninium (Trp-Tyr) (with M-252)). H99 functions as the Proton acceptor in the catalytic mechanism. A cross-link (tryptophyl-tyrosyl-methioninium (Tyr-Met) (with W-98)) is located at residues Y226 to M252. Residue H267 coordinates heme b. Positions H267–E286 are disordered.

The protein belongs to the peroxidase family. Peroxidase/catalase subfamily. Homodimer or homotetramer. The cofactor is heme b. Post-translationally, formation of the three residue Trp-Tyr-Met cross-link is important for the catalase, but not the peroxidase activity of the enzyme.

The enzyme catalyses H2O2 + AH2 = A + 2 H2O. It catalyses the reaction 2 H2O2 = O2 + 2 H2O. Functionally, bifunctional enzyme with both catalase and broad-spectrum peroxidase activity. In Thioalkalivibrio sulfidiphilus (strain HL-EbGR7), this protein is Catalase-peroxidase.